Here is a 328-residue protein sequence, read N- to C-terminus: Phosphate acyltransferase (328 aa).

This sequence belongs to the PlsX family. In terms of assembly, homodimer. Probably interacts with PlsY.

Its subcellular location is the cytoplasm. It carries out the reaction a fatty acyl-[ACP] + phosphate = an acyl phosphate + holo-[ACP]. It participates in lipid metabolism; phospholipid metabolism. Catalyzes the reversible formation of acyl-phosphate (acyl-PO(4)) from acyl-[acyl-carrier-protein] (acyl-ACP). This enzyme utilizes acyl-ACP as fatty acyl donor, but not acyl-CoA. This is Phosphate acyltransferase from Mycoplasma pneumoniae (strain ATCC 29342 / M129 / Subtype 1) (Mycoplasmoides pneumoniae).